Consider the following 1252-residue polypeptide: Myosin-1 (1252 aa).

Positions 1 to 27 are disordered; it reads MAPSKKAGKKVTPASKKSAGQGKVAKA. The Myosin motor domain maps to 38-712; sequence VGVSDMTLLT…TLFALETMRD (675 aa). 128-135 lines the ATP pocket; sequence GESGAGKT. Position 356 is a phosphoserine (S356). The segment at 403–485 is actin-binding; sequence IIGILDIFGF…PGIFAALNDA (83 aa). IQ domains are found at residues 716–736 and 737–762; these read HNMA…KHEC and ARRI…YGHQ. In terms of domain architecture, TH1 spans 770-953; it reads RRRFSLLSYR…TVHVASGEPP (184 aa). 2 disordered regions span residues 945-1049 and 1103-1228; these read VHVA…PETP and PPKA…PATA. 2 stretches are compositionally biased toward pro residues: residues 989–999 and 1028–1046; these read RSVPKPKPVAQ and RPPP…PAKP. In terms of domain architecture, SH3 spans 1046–1104; it reads PETPMYRAKFAFEGQEGEMSLKKDDVVELVEKDDNGWWLVKMDGVEGWAPNNYLELVPP. The span at 1162–1175 shows a compositional bias: polar residues; sequence ADTTPASSRPSSAI. Over residues 1178 to 1193 the composition is skewed to pro residues; sequence KPPPPVAAKPKPPVIP. Over residues 1194–1203 the composition is skewed to low complexity; it reads VKPSVSAKGP. Residues 1204–1215 are compositionally biased toward pro residues; that stretch reads AKPPIPTAPRPP. Positions 1216–1228 are enriched in low complexity; that stretch reads AASTSRSSKPATA.

Belongs to the TRAFAC class myosin-kinesin ATPase superfamily. Myosin family. Phosphorylation of the TEDS site (Ser-356) is required for the polarization of the actin cytoskeleton. Phosphorylation probably activates the myosin-I ATPase activity.

The protein localises to the cytoplasm. The protein resides in the cytoskeleton. It localises to the actin patch. Type-I myosin implicated in the organization of the actin cytoskeleton. Required for proper actin cytoskeleton polarization. At the cell cortex, assembles in patch-like structures together with proteins from the actin-polymerizing machinery and promotes actin assembly. Functions as actin nucleation-promoting factor (NPF) for the Arp2/3 complex. This is Myosin-1 (MYO1) from Laccaria bicolor (strain S238N-H82 / ATCC MYA-4686) (Bicoloured deceiver).